The following is a 157-amino-acid chain: MSYRSLSFIPNFNDHNVFSNRFNQIDKMFSTLTGEKPISDTPTYNLCQINEIEYQLTLSIPGYQEKELDISVHNNQLSIQGKKENSDTQECNKWLHKGIVFNNFSLNFNLDHKIKVKKAELSLGLLKLDFECNIPEEEKPKKISINVPNDTKKIDKK.

Residues 35-148 (EKPISDTPTY…KPKKISINVP (114 aa)) form the sHSP domain.

This sequence belongs to the small heat shock protein (HSP20) family.

This chain is Small heat shock protein ibp (ibp), found in Buchnera aphidicola subsp. Acyrthosiphon pisum (strain APS) (Acyrthosiphon pisum symbiotic bacterium).